The chain runs to 847 residues: Leucine--tRNA ligase (847 aa).

Residues 43–53 (PYPSGKLHMGH) carry the 'HIGH' region motif. A 'KMSKS' region motif is present at residues 607-611 (KMSKS). Residue K610 coordinates ATP.

This sequence belongs to the class-I aminoacyl-tRNA synthetase family.

It is found in the cytoplasm. It catalyses the reaction tRNA(Leu) + L-leucine + ATP = L-leucyl-tRNA(Leu) + AMP + diphosphate. The chain is Leucine--tRNA ligase from Buchnera aphidicola subsp. Cinara cedri (strain Cc).